Consider the following 807-residue polypeptide: MSGWPRIYYKLLNLPLSILVKSKSIPADPAPELGLDTSRPIMYVLPYNSKADLLTLRAQCLAHDLPDPLEPLEIDGTLLPRYVFIHGGPRVFTYYTPKEESIKLFHDYLDLHRSNPNLDVQMVPVSVMFGRAPGREKGEVNPPLRMLNGVQKFFAVLWLGRDSFVRFSPSVSLRRMADEHGTDKTIAQKLARVARMHFARQRLAAVGPRLPARQDLFNKLLASRAIAKAVEDEARSKKISHEKAQQNAIALMEEIAANFSYEMIRLTDRILGFTWNRLYQGINVHNAERVRQLAHDGHELVYVPCHRSHMDYLLLSYVLYHQGLVPPHIAAGINLNFWPAGPIFRRLGAFFIRRTFKGNKLYSTVFREYLGELFSRGYSVEYFVEGGRSRTGRLLDPKTGTLSMTIQAMLRGGTRPITLIPIYIGYEHVMEVGTYAKELRGATKEKESLPQMLRGLSKLRNLGQGYVNFGEPMPLMTYLNQHVPDWRESIDPIEAVRPAWLTPTVNNIAADLMVRINNAGAANAMNLCCTALLASRQRSLTREQLTEQLNCYLDLMRNVPYSTDSTVPSASASELIDHALQMNKFEVEKDTIGDIIILPREQAVLMTYYRNNIAHMLVLPSLMAAIVTQHRHISRDVLMEHVNVLYPMLKAELFLRWDRDELPDVIDALANEMQRQGLITLQDDELHINPVHSRTLQLLAAGARETLQRYAITFWLLSANPSINRGTLEKESRTVAQRLSVLHGINAPEFFDKAVFSSLVLTLRDEGYISDSGDAEPAETMKVYQLLAELITSDVRLTIESATQGEG.

An HXXXXD motif motif is present at residues 306-311 (HRSHMD).

This sequence belongs to the GPAT/DAPAT family.

It localises to the cell inner membrane. The enzyme catalyses sn-glycerol 3-phosphate + an acyl-CoA = a 1-acyl-sn-glycero-3-phosphate + CoA. It participates in phospholipid metabolism; CDP-diacylglycerol biosynthesis; CDP-diacylglycerol from sn-glycerol 3-phosphate: step 1/3. This Escherichia coli O157:H7 protein is Glycerol-3-phosphate acyltransferase (plsB).